A 453-amino-acid polypeptide reads, in one-letter code: MSFDLIIKNGTVILENEARVIDIAAQGGKIAAIGENLGEAKNVLDATGLIVSPGMVDAHTHISEPGRTHWEGYETGTRAAAKGGITTMIEMPLNQLPATVDRETIELKFDAAKGKLTIDAAQLGGLVSYNLDRLHELDEVGVVGFKCFVATCGDRGIDNDFRDVNDWQFYKGAQKLGEMDQTVLVHCENALICDELGEEAKREGRVTAHDYVASRPVFTEVEAIRRVLYLAKAAGCRLHVCHISSPEGVEEVTRARQEVQDVTCESCPHYFVLDTDQFEEIGTLAKCSPPIRDQENQKGMWEKLFNGEIDCLVSDHSPCPPEMKAGNIMQAWGGIAGLQNCMDVMFDEAVQKRGMSLPMFGKLMATNAADIFGLKHKGRIAPGKDADLVFIQPDSSYVLKNEDLEYRHKVSPYVGRTIGARITKTILRGDVIYDIEHGFPVPPKGQFILKHQQ.

Histidine 59, histidine 61, lysine 146, histidine 186, histidine 242, and aspartate 315 together coordinate Zn(2+). Residue lysine 146 is modified to N6-carboxylysine.

This sequence belongs to the metallo-dependent hydrolases superfamily. Allantoinase family. Homotetramer. It depends on Zn(2+) as a cofactor. Carboxylation allows a single lysine to coordinate two zinc ions.

The enzyme catalyses (S)-allantoin + H2O = allantoate + H(+). It functions in the pathway nitrogen metabolism; (S)-allantoin degradation; allantoate from (S)-allantoin: step 1/1. Functionally, catalyzes the conversion of allantoin (5-ureidohydantoin) to allantoic acid by hydrolytic cleavage of the five-member hydantoin ring. In Salmonella gallinarum (strain 287/91 / NCTC 13346), this protein is Allantoinase.